We begin with the raw amino-acid sequence, 199 residues long: ATP-dependent Clp protease proteolytic subunit (199 aa).

S99 (nucleophile) is an active-site residue. Residue H124 is part of the active site.

This sequence belongs to the peptidase S14 family. As to quaternary structure, fourteen ClpP subunits assemble into 2 heptameric rings which stack back to back to give a disk-like structure with a central cavity, resembling the structure of eukaryotic proteasomes.

It localises to the cytoplasm. It carries out the reaction Hydrolysis of proteins to small peptides in the presence of ATP and magnesium. alpha-casein is the usual test substrate. In the absence of ATP, only oligopeptides shorter than five residues are hydrolyzed (such as succinyl-Leu-Tyr-|-NHMec, and Leu-Tyr-Leu-|-Tyr-Trp, in which cleavage of the -Tyr-|-Leu- and -Tyr-|-Trp bonds also occurs).. Its function is as follows. Cleaves peptides in various proteins in a process that requires ATP hydrolysis. Has a chymotrypsin-like activity. Plays a major role in the degradation of misfolded proteins. The polypeptide is ATP-dependent Clp protease proteolytic subunit (Moorella thermoacetica (strain ATCC 39073 / JCM 9320)).